We begin with the raw amino-acid sequence, 282 residues long: Putative hydrolase BamMC406_5393 (282 aa).

The Mg(2+) site is built by glutamate 124, glutamate 126, and aspartate 155.

The protein belongs to the FAH family. Mg(2+) serves as cofactor.

The sequence is that of Putative hydrolase BamMC406_5393 from Burkholderia ambifaria (strain MC40-6).